The sequence spans 299 residues: Putative ammonium transporter 4 member 1 (299 aa).

5 helical membrane passes run 16–36 (AWPL…LVIL), 59–79 (VLLT…GFNG), 104–124 (LLVW…ISAV), 158–178 (VLHT…LLLL), and 218–238 (AGIA…CLAV).

The protein belongs to the ammonia transporter channel (TC 1.A.11.2) family.

It is found in the membrane. The sequence is that of Putative ammonium transporter 4 member 1 (AMT4-1) from Oryza sativa subsp. japonica (Rice).